A 737-amino-acid polypeptide reads, in one-letter code: Genome polyprotein (737 aa).

N-acetylserine; by host is present on Ser2. An interaction with STAT1 region spans residues 2 to 23 (STNPKPQRKTKRNTNRRPQDVK). Residues 2–58 (STNPKPQRKTKRNTNRRPQDVKFPGGGQIVGGVYLLPRRGPRLGVRATRKTSERSQP) form an interaction with EIF2AK2/PKR region. Residues 2-59 (STNPKPQRKTKRNTNRRPQDVKFPGGGQIVGGVYLLPRRGPRLGVRATRKTSERSQPR) are interaction with DDX3X. The disordered stretch occupies residues 2–75 (STNPKPQRKT…PKDRRSTGKS (74 aa)). At 2–168 (STNPKPQRKT…EDGINYATGN (167 aa)) the chain is on the cytoplasmic side. 2 short sequence motifs (nuclear localization signal) span residues 5–13 (PKPQRKTKR) and 38–43 (PRRGPR). Over residues 7-16 (PQRKTKRNTN) the composition is skewed to basic residues. Positions 32-47 (GGVYLLPRRGPRLGVR) are enriched in low complexity. Position 53 is a phosphoserine; by host (Ser53). Short sequence motifs (nuclear localization signal) lie at residues 58–64 (PRGRRQP) and 66–71 (PKDRRS). Residues Ser99 and Ser116 each carry the phosphoserine; by host modification. The tract at residues 112-152 (PRHRSRNLGKVIDTLTCGFADLMGYIPVVGAPVGGVARALA) is important for endoplasmic reticulum and mitochondrial localization. An interaction with APOA2 region spans residues 122 to 173 (VIDTLTCGFADLMGYIPVVGAPVGGVARALAHGVRVLEDGINYATGNLPGCS). The important for lipid droplets localization stretch occupies residues 164-167 (YATG). Residues 169 to 189 (LPGCSFSIFLLALLSCVTVPV) traverse the membrane as a helical segment. The propeptide at 178-191 (LLALLSCVTVPVSA) is ER anchor for the core protein, removed in mature form by host signal peptidase. The Lumenal segment spans residues 190 to 358 (SAVEVRNISS…FGGHWGVVFG (169 aa)). 3 N-linked (GlcNAc...) asparagine; by host glycosylation sites follow: Asn196, Asn209, and Asn233. The important for fusion stretch occupies residues 265–296 (IVMAATVCSALYVGDICGAVMIASQAFIISPE). The N-linked (GlcNAc...) asparagine; by host glycan is linked to Asn305. Residues 359–379 (LAYFSMQGAWAKVIAILLLVA) form a helical membrane-spanning segment. The Lumenal portion of the chain corresponds to 380 to 729 (GVDASTQVTG…WEWVILLFLL (350 aa)). The interval 385 to 411 (TQVTGGQAAHTVRGVASIFSPGSRQDI) is HVR1. 4 N-linked (GlcNAc...) (high mannose) asparagine; by host glycosylation sites follow: Asn417, Asn423, Asn430, and Asn448. 4 cysteine pairs are disulfide-bonded: Cys429/Cys554, Cys452/Cys459, Cys488/Cys496, and Cys505/Cys510. The tract at residues 474-481 (YETNVTNE) is HVR2. The segment at 482-495 (EDMRPYCWHYPPKP) is CD81-binding 1. N-linked (GlcNAc...) asparagine; by host glycosylation occurs at Asn542. Positions 546 to 553 (PPRGAWFG) are CD81-binding 2. Residue Asn558 is glycosylated (N-linked (GlcNAc...) (high mannose) asparagine; by host). 4 cysteine pairs are disulfide-bonded: Cys566–Cys571, Cys585–Cys589, Cys601–Cys624, and Cys611–Cys648. N-linked (GlcNAc...) (high mannose) asparagine; by host glycans are attached at residues Asn627 and Asn649. A disulfide bridge connects residues Cys656 and Cys681. Positions 664–675 (SQQSPLLHSTTE) are PKR/eIF2-alpha phosphorylation homology domain (PePHD). A helical membrane pass occupies residues 730–737 (LADARVCA).

Belongs to the hepacivirus polyprotein family. In terms of assembly, homooligomer. Interacts with E1 (via C-terminus). Interacts with the non-structural protein 5A. Interacts (via N-terminus) with host STAT1 (via SH2 domain); this interaction results in decreased STAT1 phosphorylation and ubiquitin-mediated proteasome-dependent STAT1 degradation, leading to decreased IFN-stimulated gene transcription. Interacts with host STAT3; this interaction constitutively activates STAT3. Interacts with host LTBR receptor. Interacts with host TNFRSF1A receptor and possibly induces apoptosis. Interacts with host HNRPK. Interacts with host YWHAE. Interacts with host UBE3A/E6AP. Interacts with host DDX3X. Interacts with host APOA2. Interacts with host RXRA protein. Interacts with host SP110 isoform 3/Sp110b; this interaction sequesters the transcriptional corepressor SP110 away from the nucleus. Interacts with host CREB3 nuclear transcription protein; this interaction triggers cell transformation. Interacts with host ACY3. Interacts with host C1QR1. Interacts with host RBM24; this interaction, which enhances the interaction of the mature core protein with 5'-UTR, may inhibit viral translation and favor replication. Interacts with host EIF2AK2/PKR; this interaction induces the autophosphorylation of EIF2AK2. Part of the viral assembly initiation complex composed of NS2, E1, E2, NS3, NS4A, NS5A and the mature core protein. As to quaternary structure, forms a heterodimer with envelope glycoprotein E2. Interacts with mature core protein. Interacts with protease NS2. The heterodimer E1/E2 interacts with host CLDN1; this interaction plays a role in viral entry into host cell. Interacts with host SPSB2 (via C-terminus). Part of the viral assembly initiation complex composed of NS2, E1, E2, NS3, NS4A, NS5A and the mature core protein. Forms a heterodimer with envelope glycoprotein E1. Interacts with host CD81 and SCARB1 receptors; these interactions play a role in viral entry into host cell. Interacts with host EIF2AK2/PKR; this interaction inhibits EIF2AK2 and probably allows the virus to evade the innate immune response. Interacts with host CD209/DC-SIGN and CLEC4M/DC-SIGNR. Interact with host SPCS1; this interaction is essential for viral particle assembly. Interacts with protease NS2. The heterodimer E1/E2 interacts with host CLDN1; this interaction plays a role in viral entry into host cell. Part of the viral assembly initiation complex composed of NS2, E1, E2, NS3, NS4A, NS5A and the mature core protein. Specific enzymatic cleavages in vivo yield mature proteins. The structural proteins, core, E1, E2 and p7 are produced by proteolytic processing by host signal peptidases. The core protein precursor is synthesized as a 23 kDa, which is retained in the ER membrane through the hydrophobic signal peptide. Cleavage by the signal peptidase releases the 21 kDa mature core protein. The cleavage of the core protein precursor occurs between aminoacids 176 and 188 but the exact cleavage site is not known. Some degraded forms of the core protein appear as well during the course of infection. The other proteins (p7, NS2, NS3, NS4A, NS4B, NS5A and NS5B) are cleaved by the viral proteases. Autoprocessing between NS2 and NS3 is mediated by the NS2 cysteine protease catalytic domain and regulated by the NS3 N-terminal domain. In terms of processing, phosphorylated by host PKC and PKA. Post-translationally, ubiquitinated; mediated by UBE3A and leading to core protein subsequent proteasomal degradation. Highly N-glycosylated.

It localises to the host endoplasmic reticulum membrane. The protein resides in the host mitochondrion membrane. The protein localises to the virion. It is found in the host cytoplasm. Its subcellular location is the host nucleus. It localises to the host lipid droplet. The protein resides in the virion membrane. Packages viral RNA to form a viral nucleocapsid, and promotes virion budding. Participates in the viral particle production as a result of its interaction with the non-structural protein 5A. Binds RNA and may function as a RNA chaperone to induce the RNA structural rearrangements taking place during virus replication. Modulates viral translation initiation by interacting with viral IRES and 40S ribosomal subunit. Affects various cell signaling pathways, host immunity and lipid metabolism. Prevents the establishment of cellular antiviral state by blocking the interferon-alpha/beta (IFN-alpha/beta) and IFN-gamma signaling pathways and by blocking the formation of phosphorylated STAT1 and promoting ubiquitin-mediated proteasome-dependent degradation of STAT1. Activates STAT3 leading to cellular transformation. Regulates the activity of cellular genes, including c-myc and c-fos. May repress the promoter of p53, and sequester CREB3 and SP110 isoform 3/Sp110b in the cytoplasm. Represses cell cycle negative regulating factor CDKN1A, thereby interrupting an important check point of normal cell cycle regulation. Targets transcription factors involved in the regulation of inflammatory responses and in the immune response: suppresses TNF-induced NF-kappa-B activation, and activates AP-1. Binds to dendritic cells (DCs) via C1QR1, resulting in down-regulation of T-lymphocytes proliferation. Alters lipid metabolism by interacting with hepatocellular proteins involved in lipid accumulation and storage. Induces up-regulation of FAS promoter activity, and thereby contributes to the increased triglyceride accumulation in hepatocytes (steatosis). Functionally, forms a heterodimer with envelope glycoprotein E2, which mediates virus attachment to the host cell, virion internalization through clathrin-dependent endocytosis and fusion with host membrane. Fusion with the host cell is most likely mediated by both E1 and E2, through conformational rearrangements of the heterodimer required for fusion rather than a classical class II fusion mechanism. E1/E2 heterodimer binds host apolipoproteins such as APOB and ApoE thereby forming a lipo-viro-particle (LVP). APOE associated to the LVP allows the initial virus attachment to cell surface receptors such as the heparan sulfate proteoglycans (HSPGs), syndecan-1 (SDC1), syndecan-1 (SDC2), the low-density lipoprotein receptor (LDLR) and scavenger receptor class B type I (SCARB1). The cholesterol transfer activity of SCARB1 allows E2 exposure and binding of E2 to SCARB1 and the tetraspanin CD81. E1/E2 heterodimer binding on CD81 activates the epithelial growth factor receptor (EGFR) signaling pathway. Diffusion of the complex E1-E2-EGFR-SCARB1-CD81 to the cell lateral membrane allows further interaction with Claudin 1 (CLDN1) and occludin (OCLN) to finally trigger HCV entry. In terms of biological role, forms a heterodimer with envelope glycoprotein E1, which mediates virus attachment to the host cell, virion internalization through clathrin-dependent endocytosis and fusion with host membrane. Fusion with the host cell is most likely mediated by both E1 and E2, through conformational rearrangements of the heterodimer required for fusion rather than a classical class II fusion mechanism. The interaction between envelope glycoprotein E2 and host apolipoprotein E/APOE allows the proper assembly, maturation and infectivity of the viral particles. This interaction is probably promoted via the up-regulation of cellular autophagy by the virus. E1/E2 heterodimer binds host apolipoproteins such as APOB and APOE thereby forming a lipo-viro-particle (LVP). APOE associated to the LVP allows the initial virus attachment to cell surface receptors such as the heparan sulfate proteoglycans (HSPGs), syndecan-1 (SDC1), syndecan-1 (SDC2), the low-density lipoprotein receptor (LDLR) and scavenger receptor class B type I (SCARB1). The cholesterol transfer activity of SCARB1 allows E2 exposure and binding of E2 to SCARB1 and the tetraspanin CD81. E1/E2 heterodimer binding on CD81 activates the epithelial growth factor receptor (EGFR) signaling pathway. Diffusion of the complex E1-E2-EGFR-SCARB1-CD81 to the cell lateral membrane allows further interaction with Claudin 1 (CLDN1) and occludin (OCLN) to finally trigger HCV entry. Inhibits host EIF2AK2/PKR activation, preventing the establishment of an antiviral state. Viral ligand for CD209/DC-SIGN and CLEC4M/DC-SIGNR, which are respectively found on dendritic cells (DCs), and on liver sinusoidal endothelial cells and macrophage-like cells of lymph node sinuses. These interactions allow the capture of circulating HCV particles by these cells and subsequent facilitated transmission to permissive cells such as hepatocytes and lymphocyte subpopulations. In Hepatitis C virus (isolate HC-J7) (HCV), this protein is Genome polyprotein.